Here is a 283-residue protein sequence, read N- to C-terminus: uncharacterized protein (283 aa).

The next 3 helical transmembrane spans lie at 18–38 (VYDI…AKLI), 61–81 (VIYF…LGLD), and 94–114 (IVLG…IFLI).

This sequence belongs to the MscS (TC 1.A.23) family.

It is found in the cell membrane. This is an uncharacterized protein from Archaeoglobus fulgidus (strain ATCC 49558 / DSM 4304 / JCM 9628 / NBRC 100126 / VC-16).